Consider the following 147-residue polypeptide: Protein SprT-like (147 aa).

One can recognise a SprT-like domain in the interval Ala9–Leu142. Position 65 (His65) interacts with Zn(2+). Glu66 is a catalytic residue. His69 is a Zn(2+) binding site.

Belongs to the SprT family. Zn(2+) serves as cofactor.

Its subcellular location is the cytoplasm. The chain is Protein SprT-like (yciD) from Lactococcus lactis subsp. lactis (strain IL1403) (Streptococcus lactis).